Consider the following 205-residue polypeptide: MATPLGWSQGGSGSVCLAFDQLRDVIESQEELIHQLRNVMVLQDENFVSKEEFHEIEKKLVEEKAAHAKTKALLAKEEEKLQFALGEVEVLSKQLEKEKMAFEKALSSVKSRVLQESSKKDQLITKCNEIESHIIKQEDILNGKENEIKELQQVISQQKQNFRNHISDFRIQKQQETYMAQVLDQKRKKATGMRRARSRQCSREK.

A coiled-coil region spans residues leucine 17 to serine 167. A required for interaction with CBX5 and TBPL1 region spans residues glutamate 138–glutamine 185. The interval glutamine 185–lysine 205 is disordered. The segment covering lysine 186–lysine 205 has biased composition (basic residues).

This sequence belongs to the SPATA24 family. In terms of assembly, homodimer. Interacts with CBX3, CBX5, GMNN, GTF2B, TBPL1 and the polycomb proteins PHCF2, RNF2 and SCMH1 but not with CBX1 or PCGF2. In terms of tissue distribution, testis-specific (at protein level).

The protein localises to the cytoplasm. It is found in the nucleus. Its subcellular location is the nucleolus. The protein resides in the nucleoplasm. Functionally, binds DNA with high affinity but does not bind to TATA boxes. Synergises with GMNN and TBP in activation of TATA box-containing promoters and with GMNN and TBPL1 in activation of the NF1 TATA-less promoter. May play a role in cytoplasm movement and removal during spermiogenesis. This Mus musculus (Mouse) protein is Spermatogenesis-associated protein 24 (Spata24).